The chain runs to 207 residues: Protein LURP1 (207 aa).

This sequence belongs to the LOR family. As to expression, limited to discrete pathogen infection sites in leaves.

Involved in basal defense against virulent oomycetes. Might be related to the phospholipid scramblase and tubby-like superfamily of membrane tethered transcription factors. This is Protein LURP1 (LURP1) from Arabidopsis thaliana (Mouse-ear cress).